We begin with the raw amino-acid sequence, 736 residues long: Microtubule-associated protein mu-2 (736 aa).

It belongs to the orthoreovirus mu-2 protein family. As to quaternary structure, interacts with protein mu-NS; in viral inclusions. Interacts with polymerase lambda-3; this interaction stimulates the ATPase activity of mu-2. It depends on a divalent metal cation as a cofactor.

The protein resides in the virion. The protein localises to the host cytoplasm. Its subcellular location is the host cytoskeleton. Minor inner capsid (core) component. Displays NTPase and RNA 5'-triphosphatase (RTPase) activities. ATP is the preferred substrate for hydrolysis. May function as a cofactor of polymerase lambda-3. Associates with microtubules and plays a role in the formation, structural organization and morphology of viral inclusions, where the assembly of cores and the replication of viral RNA occur. Together with mu-NS, recruits the other core proteins to these inclusions. The polypeptide is Microtubule-associated protein mu-2 (M1) (Mammalia (T3D)).